The following is a 474-amino-acid chain: Cell division protein FtsP (474 aa).

A signal peptide (tat-type signal) is located at residues 1–27; that stretch reads MSLSRRQFIQAAGLALGAGSLPLRAQA. In terms of domain architecture, Plastocyanin-like spans 229–288; that stretch reads WVRLRLLNASNARRYTLQLSDGRPLYVVASDQGFLPAPVAVQQLSLAPGERREVVIDMSQ.

Belongs to the FtsP family. In terms of processing, predicted to be exported by the Tat system. The position of the signal peptide cleavage has not been experimentally proven.

It is found in the periplasm. Its function is as follows. Cell division protein that is required for growth during stress conditions. May be involved in protecting or stabilizing the divisomal assembly under conditions of stress. This Yersinia pestis protein is Cell division protein FtsP.